We begin with the raw amino-acid sequence, 149 residues long: Transcriptional repressor NrdR (149 aa).

A zinc finger spans residues 3–34; that stretch reads CPFCGFEESKVVDSRSTDDNTTIRRRRECLKC. The ATP-cone domain occupies 49 to 139; sequence ILVIKKDLTR…VYRQFKDIDT (91 aa).

This sequence belongs to the NrdR family. Requires Zn(2+) as cofactor.

In terms of biological role, negatively regulates transcription of bacterial ribonucleotide reductase nrd genes and operons by binding to NrdR-boxes. This Clostridium beijerinckii (strain ATCC 51743 / NCIMB 8052) (Clostridium acetobutylicum) protein is Transcriptional repressor NrdR.